Consider the following 116-residue polypeptide: Large ribosomal subunit protein bL20 (116 aa).

Belongs to the bacterial ribosomal protein bL20 family.

In terms of biological role, binds directly to 23S ribosomal RNA and is necessary for the in vitro assembly process of the 50S ribosomal subunit. It is not involved in the protein synthesizing functions of that subunit. In Helicobacter pylori (strain G27), this protein is Large ribosomal subunit protein bL20.